A 419-amino-acid polypeptide reads, in one-letter code: GTPase Obg (419 aa).

The Obg domain occupies 1–156 (MRFVDYVSIE…FYLDLQLKVM (156 aa)). The 178-residue stretch at 157-334 (ADIGLVGKPN…LGEKQKKLEI (178 aa)) folds into the OBG-type G domain. GTP-binding positions include 163 to 170 (GKPNAGKS), 188 to 192 (FTTLA), 209 to 212 (DLPG), 278 to 281 (NKCD), and 315 to 317 (NII). The Mg(2+) site is built by Ser170 and Thr190. Residues 342–419 (IEFNLKAPFL…RIYEFEFHWN (78 aa)) enclose the OCT domain.

Belongs to the TRAFAC class OBG-HflX-like GTPase superfamily. OBG GTPase family. Monomer. Mg(2+) serves as cofactor.

The protein resides in the cytoplasm. Functionally, an essential GTPase which binds GTP, GDP and possibly (p)ppGpp with moderate affinity, with high nucleotide exchange rates and a fairly low GTP hydrolysis rate. Plays a role in control of the cell cycle, stress response, ribosome biogenesis and in those bacteria that undergo differentiation, in morphogenesis control. The polypeptide is GTPase Obg (Mesomycoplasma hyopneumoniae (strain J / ATCC 25934 / NCTC 10110) (Mycoplasma hyopneumoniae)).